A 554-amino-acid polypeptide reads, in one-letter code: 2-succinyl-5-enolpyruvyl-6-hydroxy-3-cyclohexene-1-carboxylate synthase (554 aa).

This sequence belongs to the TPP enzyme family. MenD subfamily. Homodimer. Mg(2+) is required as a cofactor. Requires Mn(2+) as cofactor. The cofactor is thiamine diphosphate.

The enzyme catalyses isochorismate + 2-oxoglutarate + H(+) = 5-enolpyruvoyl-6-hydroxy-2-succinyl-cyclohex-3-ene-1-carboxylate + CO2. The protein operates within quinol/quinone metabolism; 1,4-dihydroxy-2-naphthoate biosynthesis; 1,4-dihydroxy-2-naphthoate from chorismate: step 2/7. It functions in the pathway quinol/quinone metabolism; menaquinone biosynthesis. In terms of biological role, catalyzes the thiamine diphosphate-dependent decarboxylation of 2-oxoglutarate and the subsequent addition of the resulting succinic semialdehyde-thiamine pyrophosphate anion to isochorismate to yield 2-succinyl-5-enolpyruvyl-6-hydroxy-3-cyclohexene-1-carboxylate (SEPHCHC). This Lactococcus lactis subsp. cremoris (strain SK11) protein is 2-succinyl-5-enolpyruvyl-6-hydroxy-3-cyclohexene-1-carboxylate synthase.